The following is a 310-amino-acid chain: Biotin synthase (310 aa).

The Radical SAM core domain maps to 34-262; the sequence is GRVQLCALVN…TAQIRLSAGR (229 aa). [4Fe-4S] cluster contacts are provided by C49, C53, and C56. [2Fe-2S] cluster-binding residues include C93, C125, C185, and R257.

Belongs to the radical SAM superfamily. Biotin synthase family. Homodimer. Requires [4Fe-4S] cluster as cofactor. It depends on [2Fe-2S] cluster as a cofactor.

The enzyme catalyses (4R,5S)-dethiobiotin + (sulfur carrier)-SH + 2 reduced [2Fe-2S]-[ferredoxin] + 2 S-adenosyl-L-methionine = (sulfur carrier)-H + biotin + 2 5'-deoxyadenosine + 2 L-methionine + 2 oxidized [2Fe-2S]-[ferredoxin]. Its pathway is cofactor biosynthesis; biotin biosynthesis; biotin from 7,8-diaminononanoate: step 2/2. In terms of biological role, catalyzes the conversion of dethiobiotin (DTB) to biotin by the insertion of a sulfur atom into dethiobiotin via a radical-based mechanism. This Synechococcus sp. (strain JA-3-3Ab) (Cyanobacteria bacterium Yellowstone A-Prime) protein is Biotin synthase.